Consider the following 275-residue polypeptide: Phosphonoacetaldehyde hydrolase (275 aa).

The Nucleophile role is filled by Asp15. 2 residues coordinate Mg(2+): Asp15 and Ala17. Catalysis depends on Lys56, which acts as the Schiff-base intermediate with substrate. Asp189 lines the Mg(2+) pocket.

Belongs to the HAD-like hydrolase superfamily. PhnX family. As to quaternary structure, homodimer. It depends on Mg(2+) as a cofactor.

The catalysed reaction is phosphonoacetaldehyde + H2O = acetaldehyde + phosphate + H(+). In terms of biological role, involved in phosphonate degradation. The sequence is that of Phosphonoacetaldehyde hydrolase from Pseudomonas paraeruginosa (strain DSM 24068 / PA7) (Pseudomonas aeruginosa (strain PA7)).